Here is a 76-residue protein sequence, read N- to C-terminus: Membrane protein UL43 homolog (76 aa).

Helical transmembrane passes span 7–27 (AVCVVLAAFGYWVAAPISLAF) and 54–74 (ISRWLIVSVYVAAGLCYATII).

Belongs to the alphaherpesvirinae HHV-1 UL43 family.

Its subcellular location is the membrane. The sequence is that of Membrane protein UL43 homolog from Equus caballus (Horse).